The following is a 313-amino-acid chain: MLKMESTQQMVISVINTSFEAAVVAATSTLELMGIQYDYNEVFTRVKSKFDYVMDDSGVKNNLLGKAITIDQALNGKLGSAIRNRNWMTDSKTVAKLDEDVNKLRMILSSKGIDQKMRVLNACFSVKRIPGKSSSIIKCTRLMKDKIERGEVEVDDSYVDEKMEIDTIDWKFRYDQLEKRFESLKQRVNEKYNTWVQKAKKVNENMYSLQNVISQQQNQIADLQQYRNKLETDLQGKFSSLVSSVEWYLRSMELPDDVKTDIEQQLNSIDLINSINAIDDIESLIRNLIQDYDRTFLMLKGLLKQCNYEYTYE.

Positions 1-149 (MLKMESTQQM…TRLMKDKIER (149 aa)) are RNA-binding. A dimerization region spans residues 150-206 (GEVEVDDSYVDEKMEIDTIDWKFRYDQLEKRFESLKQRVNEKYNTWVQKAKKVNENM). A coiled-coil region spans residues 166–237 (DTIDWKFRYD…NKLETDLQGK (72 aa)). Positions 170-234 (WKFRYDQLEK…QYRNKLETDL (65 aa)) are interaction with host ZC3H7B. The interval 208–313 (SLQNVISQQQ…KQCNYEYTYE (106 aa)) is interaction with host EIF4G1.

It belongs to the rotavirus NSP3 family. In terms of assembly, homodimer. Interacts (via the coiled-coil region) with host ZC3H7B (via LD motif). Interacts with host EIF4G1.

It is found in the host cytoplasm. Functionally, plays an important role in stimulating the translation of viral mRNAs. These mRNAs are capped but not polyadenylated, instead terminating in a conserved sequence 'GACC' at the 3' that is recognized by NSP3, which competes with host PABPC1 for EIF4G1 binding. The interaction between NSP3 and host EIF4G1 stabilizes the EIF4E-EIF4G1 interaction, thereby facilitating the initiation of capped mRNA translation. The chain is Non-structural protein 3 from Rotavirus A (isolate RVA/Human/United States/WI61/1983/G9P1A[8]) (RV-A).